A 115-amino-acid chain; its full sequence is Immunoglobulin kappa chain variable 12-41 (115 aa).

Residues 1-20 form the signal peptide; the sequence is MSVLTQVLALLLLWLTGARC. The tract at residues 21–43 is framework-1; the sequence is DIQMTQSPASLSASVGETVTITC. Cys43 and Cys108 form a disulfide bridge. The interval 44 to 54 is complementarity-determining-1; sequence RASGNIHNYLA. The tract at residues 55-69 is framework-2; that stretch reads WYQQKQGKSPQLLVY. A complementarity-determining-2 region spans residues 70 to 76; it reads NAKTLAD. The framework-3 stretch occupies residues 77 to 108; that stretch reads GVPSRFSGSGSGTQYSLKINSLQPEDFGSYYC. The tract at residues 109 to 115 is complementarity-determining-3; it reads QHFWSTP.

The polypeptide is Immunoglobulin kappa chain variable 12-41 (Mus musculus (Mouse)).